The chain runs to 342 residues: Dihydroorotase (342 aa).

H13 and H15 together coordinate Zn(2+). Substrate-binding positions include 15-17 and N41; that span reads HLR. Zn(2+) contacts are provided by K97, H134, and H172. K97 is modified (N6-carboxylysine). Residue H134 coordinates substrate. L217 serves as a coordination point for substrate. A Zn(2+)-binding site is contributed by D245. The active site involves D245. Residues H249 and A261 each coordinate substrate.

Belongs to the metallo-dependent hydrolases superfamily. DHOase family. Class II DHOase subfamily. Homodimer. Zn(2+) is required as a cofactor.

It catalyses the reaction (S)-dihydroorotate + H2O = N-carbamoyl-L-aspartate + H(+). It functions in the pathway pyrimidine metabolism; UMP biosynthesis via de novo pathway; (S)-dihydroorotate from bicarbonate: step 3/3. Functionally, catalyzes the reversible cyclization of carbamoyl aspartate to dihydroorotate. The polypeptide is Dihydroorotase (Shewanella amazonensis (strain ATCC BAA-1098 / SB2B)).